The primary structure comprises 281 residues: NADPH-dependent 7-cyano-7-deazaguanine reductase (281 aa).

Isoleucine 81 to serine 83 is a substrate binding site. An NADPH-binding site is contributed by serine 83–lysine 84. The active-site Thioimide intermediate is the cysteine 188. Aspartate 195 serves as the catalytic Proton donor. Histidine 227 to glutamate 228 is a binding site for substrate. Arginine 256–glycine 257 lines the NADPH pocket.

Belongs to the GTP cyclohydrolase I family. QueF type 2 subfamily. As to quaternary structure, homodimer.

The protein localises to the cytoplasm. It carries out the reaction 7-aminomethyl-7-carbaguanine + 2 NADP(+) = 7-cyano-7-deazaguanine + 2 NADPH + 3 H(+). It participates in tRNA modification; tRNA-queuosine biosynthesis. Functionally, catalyzes the NADPH-dependent reduction of 7-cyano-7-deazaguanine (preQ0) to 7-aminomethyl-7-deazaguanine (preQ1). This Paracidovorax citrulli (strain AAC00-1) (Acidovorax citrulli) protein is NADPH-dependent 7-cyano-7-deazaguanine reductase.